We begin with the raw amino-acid sequence, 338 residues long: Anthranilate phosphoribosyltransferase (338 aa).

5-phospho-alpha-D-ribose 1-diphosphate-binding positions include Gly81, 84-85, Thr89, 91-94, 109-117, and Ala121; these read GD, NIST, and KHGNRNLSS. Residue Gly81 participates in anthranilate binding. Ser93 is a binding site for Mg(2+). Asn112 contacts anthranilate. Residue Arg167 coordinates anthranilate. The Mg(2+) site is built by Asp226 and Glu227.

This sequence belongs to the anthranilate phosphoribosyltransferase family. As to quaternary structure, homodimer. Mg(2+) is required as a cofactor.

It carries out the reaction N-(5-phospho-beta-D-ribosyl)anthranilate + diphosphate = 5-phospho-alpha-D-ribose 1-diphosphate + anthranilate. The protein operates within amino-acid biosynthesis; L-tryptophan biosynthesis; L-tryptophan from chorismate: step 2/5. Its function is as follows. Catalyzes the transfer of the phosphoribosyl group of 5-phosphorylribose-1-pyrophosphate (PRPP) to anthranilate to yield N-(5'-phosphoribosyl)-anthranilate (PRA). The chain is Anthranilate phosphoribosyltransferase from Cereibacter sphaeroides (strain ATCC 17023 / DSM 158 / JCM 6121 / CCUG 31486 / LMG 2827 / NBRC 12203 / NCIMB 8253 / ATH 2.4.1.) (Rhodobacter sphaeroides).